Reading from the N-terminus, the 311-residue chain is Olfactory receptor 5P3 (311 aa).

Residues 1-25 (MGTGNDTTVVEFTLLGLSEDTTVCA) are Extracellular-facing. The N-linked (GlcNAc...) asparagine glycan is linked to Asn5. Residues 26-46 (ILFLVFLGIYVVTLMGNISII) traverse the membrane as a helical segment. Residues 47 to 54 (VLIRRSHH) are Cytoplasmic-facing. Residues 55–75 (LHTPMYIFLCHLAFVDIGYSS) traverse the membrane as a helical segment. Residues 76-99 (SVTPVMLMSFLRKETSLPVAGCVA) are Extracellular-facing. An intrachain disulfide couples Cys97 to Cys189. The helical transmembrane segment at 100-120 (QLCSVVTFGTAECFLLAAMAY) threads the bilayer. The Cytoplasmic segment spans residues 121-139 (DRYVAICSPLLYSTCMSPG). A helical membrane pass occupies residues 140 to 160 (VCIILVGMSYLGGCVNAWTFI). Topologically, residues 161–196 (GCLLRLSFCGPNKVNHFFCDYSPLLKLACSHDFTFE) are extracellular. The helical transmembrane segment at 197 to 217 (IIPAISSGSIIVATVCVIAIS) threads the bilayer. At 218 to 237 (YIYILITILKMHSTKGRHKA) the chain is on the cytoplasmic side. Residues 238 to 258 (FSTCTSHLTAVTLFYGTITFI) traverse the membrane as a helical segment. The Extracellular segment spans residues 259-271 (YVMPKSSYSTDQN). A helical membrane pass occupies residues 272-292 (KVVSVFYTVVIPMLNPLIYSL). At 293 to 311 (RNKEIKGALKRELRIKIFS) the chain is on the cytoplasmic side.

It belongs to the G-protein coupled receptor 1 family. As to expression, expressed in the tongue.

It localises to the cell membrane. Odorant receptor (Potential). May be involved in taste perception. In Homo sapiens (Human), this protein is Olfactory receptor 5P3 (OR5P3).